The following is a 511-amino-acid chain: Centrosomal protein CCDC61 (511 aa).

The tract at residues 1 to 144 (MEVGTVVQEE…PLPLPYLGKP (144 aa)) is head domain. The stretch at 147–272 (AELQKEIRAL…RVKSLTTELA (126 aa)) forms a coiled coil. Disordered stretches follow at residues 306 to 403 (TRVG…SREP) and 447 to 486 (RGRK…SMDT). Positions 315–335 (GSRERIEDRGRRSEERVRRAD) are enriched in basic and acidic residues. Residues 338–352 (GSRNCITRPSPSPTG) are compositionally biased toward polar residues. Positions 366–378 (DRQRRQKEAELKS) are enriched in basic and acidic residues.

This sequence belongs to the CCDC61 family. In terms of assembly, forms homodimers (via head domain).

It localises to the cytoplasm. It is found in the cytoskeleton. The protein localises to the microtubule organizing center. The protein resides in the centrosome. Its subcellular location is the centriolar satellite. It localises to the cilium basal body. Functionally, microtubule-binding centrosomal protein required for centriole cohesion, independently of the centrosome-associated protein/CEP250 and rootletin/CROCC linker. In interphase, required for anchoring microtubule at the mother centriole subdistal appendages and for centrosome positioning. During mitosis, may be involved in spindle assembly and chromatin alignment by regulating the organization of spindle microtubules into a symmetrical structure. Plays a non-essential role in ciliogenesis. The sequence is that of Centrosomal protein CCDC61 from Danio rerio (Zebrafish).